A 196-amino-acid chain; its full sequence is MSQTELIKKLREATGAGMMDVKRALEDAGWDEEKAVQLLRERGAMKAAKKADREAREGIIGHYIHHNQRVGVLVELNCETDFVARNELFQNLAKDLAMHIAMMNPRYVSAEEIPAEELEKERQIYIQAALNEGKPQQIAEKIAEGRLKKYLEEVVLLEQPFVKDDKVKVKELIQQAIAKIGENIVVRRFCRFELGA.

The involved in Mg(2+) ion dislocation from EF-Tu stretch occupies residues 80–83 (TDFV).

The protein belongs to the EF-Ts family.

It is found in the cytoplasm. Its function is as follows. Associates with the EF-Tu.GDP complex and induces the exchange of GDP to GTP. It remains bound to the aminoacyl-tRNA.EF-Tu.GTP complex up to the GTP hydrolysis stage on the ribosome. The chain is Elongation factor Ts from Thermus thermophilus (strain ATCC BAA-163 / DSM 7039 / HB27).